We begin with the raw amino-acid sequence, 323 residues long: NADH-cytochrome b5 reductase 2 (323 aa).

Residues 30–46 (LAPIYTAVGLTGLSVGL) form a helical membrane-spanning segment. Positions 72–177 (QGWVDLKLSE…KGPLPKYQWE (106 aa)) constitute an FAD-binding FR-type domain. 180–215 (KHEHIALIAGGTGITPMYQLIRQIFKNPDDKTKVTL) contacts FAD.

The protein belongs to the flavoprotein pyridine nucleotide cytochrome reductase family. FAD is required as a cofactor.

The protein resides in the mitochondrion outer membrane. The enzyme catalyses 2 Fe(III)-[cytochrome b5] + NADH = 2 Fe(II)-[cytochrome b5] + NAD(+) + H(+). Functionally, may mediate the reduction of outer membrane cytochrome b5. This Aspergillus oryzae (strain ATCC 42149 / RIB 40) (Yellow koji mold) protein is NADH-cytochrome b5 reductase 2 (mcr1).